The sequence spans 250 residues: MANIHIVIPARLKSTRLPNKMLADIAGKPMIQRVYEQVTKSKFDSIIIATDSQKIKDIAKSFGAKVVLTRDDHQSGTDRIAEAVTKLGFADEDIVVNVQGDEPLIPIENIEQAAQLLIDKSEAVVSTLCEKITDVEDIYNPNNVKVVFDKNNYALYFSRASIPFERGFSEKEQINISEFFRHIGIYAYRVAFLKHYAELTVSPIEKYEALEQLKVLYNGYKIAIEQSAKSTPAGVDTLQDLEKVRKLFNV.

The protein belongs to the KdsB family.

It localises to the cytoplasm. The catalysed reaction is 3-deoxy-alpha-D-manno-oct-2-ulosonate + CTP = CMP-3-deoxy-beta-D-manno-octulosonate + diphosphate. It functions in the pathway nucleotide-sugar biosynthesis; CMP-3-deoxy-D-manno-octulosonate biosynthesis; CMP-3-deoxy-D-manno-octulosonate from 3-deoxy-D-manno-octulosonate and CTP: step 1/1. The protein operates within bacterial outer membrane biogenesis; lipopolysaccharide biosynthesis. Activates KDO (a required 8-carbon sugar) for incorporation into bacterial lipopolysaccharide in Gram-negative bacteria. The polypeptide is 3-deoxy-manno-octulosonate cytidylyltransferase (Francisella tularensis subsp. tularensis (strain FSC 198)).